Reading from the N-terminus, the 515-residue chain is MAARAGFQSVAPSGGAGASGGAGAAAALGPGGTPGPPVRMGPAPGQGLYRSPMPGAAYPRPGMLPGSRMTPQGPSMGPPGYGGNPSVRPGLAQSGMDQSLKRPAPQQIKQVQQQAVQNRNHNAKKKKMADKILPQRIRELVPESQDYMDLLAFERKLDQTIMRKRLDIQEALKRPIKQKRKLRIFISNTFNPAKSDAEDGEGTVASWELRVEGRLLEDSALSKYDATKQKRKFSSFFKSLVIELDKDLYGPDNHLVEWHRTATTQETDGFQVKRPGDVNVRCTVLLMLDYQPPQFKLDPRLARLLGIHTQTRPVIIQALWQYIKTHKLQDPHEREFVICDKYLQQIFESQRMKFSEIPQRLHALLMPPEPIIINHVISVDPNDQKKTACYDIDEEVDDTLKTQMNSFLLSTASQQEIATLDNKIHETIETINQLKTQREFMLSFARDPQGFINDWLQSQCRDLKVMTDVVGNSEEERRAEFYFQPWAQEAVCRYFYSKVQQRRQELEQALGIRNT.

Residues 1–128 form a disordered region; sequence MAARAGFQSV…RNHNAKKKKM (128 aa). The segment covering 14 to 23 has biased composition (gly residues); that stretch reads GGAGASGGAG. The segment at 43–167 is interaction with ESR1, NR1H4, NR3C1, PGR and SMARCA4; the sequence is APGQGLYRSP…DQTIMRKRLD (125 aa). 2 positions are modified to asymmetric dimethylarginine: arginine 68 and arginine 88. A Glycyl lysine isopeptide (Lys-Gly) (interchain with G-Cter in SUMO2) cross-link involves residue lysine 101. Over residues 103–117 the composition is skewed to low complexity; sequence PAPQQIKQVQQQAVQ. Positions 168–474 are interaction with SMARCC1 and SMARCC2; it reads IQEALKRPIK…VMTDVVGNSE (307 aa). The necessary for GR/NR3C1-mediated remodeling and transcription from chromatin; required for GR/NR3C1 interaction with the BRG1/SMARCA4 complex in vivo stretch occupies residues 180–515; sequence RKLRIFISNT…LEQALGIRNT (336 aa). Threonine 203 carries the phosphothreonine modification. Lysine 223 carries the post-translational modification N6-acetyllysine. The 78-residue stretch at 290–367 folds into the SWIB/MDM2 domain; that stretch reads YQPPQFKLDP…PQRLHALLMP (78 aa). A coiled-coil region spans residues 412-440; it reads ASQQEIATLDNKIHETIETINQLKTQREF.

Belongs to the SMARCD family. Component of the multiprotein chromatin-remodeling complexes SWI/SNF: SWI/SNF-A (BAF), SWI/SNF-B (PBAF) and related complexes. The canonical complex contains a catalytic subunit (either SMARCA4/BRG1/BAF190A or SMARCA2/BRM/BAF190B), and at least SMARCE1, ACTL6A/BAF53, SMARCC1/BAF155, SMARCC2/BAF170, and SMARCB1/SNF5/BAF47. Other subunits specific to each of the complexes may also be present permitting several possible combinations developmentally and tissue specific. Component of the BAF complex, which includes at least actin (ACTB), ARID1A/BAF250A, ARID1B/BAF250B, SMARCA2/BRM, SMARCA4/BRG1/BAF190A, ACTL6A/BAF53, ACTL6B/BAF53B, SMARCE1/BAF57, SMARCC1/BAF155, SMARCC2/BAF170, SMARCB1/SNF5/INI1, and one or more SMARCD1/BAF60A, SMARCD2/BAF60B, or SMARCD3/BAF60C. In muscle cells, the BAF complex also contains DPF3. Component of neural progenitors-specific chromatin remodeling complex (npBAF complex) composed of at least, ARID1A/BAF250A or ARID1B/BAF250B, SMARCD1/BAF60A, SMARCD3/BAF60C, SMARCA2/BRM/BAF190B, SMARCA4/BRG1/BAF190A, SMARCB1/BAF47, SMARCC1/BAF155, SMARCE1/BAF57, SMARCC2/BAF170, PHF10/BAF45A, ACTL6A/BAF53A and actin. Component of neuron-specific chromatin remodeling complex (nBAF complex) composed of at least, ARID1A/BAF250A or ARID1B/BAF250B, SMARCD1/BAF60A, SMARCD3/BAF60C, SMARCA2/BRM/BAF190B, SMARCA4/BRG1/BAF190A, SMARCB1/BAF47, SMARCC1/BAF155, SMARCE1/BAF57, SMARCC2/BAF170, DPF1/BAF45B, DPF3/BAF45C, ACTL6B/BAF53B and actin. Component of the SWI/SNF-B (PBAF) chromatin remodeling complex, at least composed of SMARCA4/BRG1, SMARCB1/BAF47/SNF5, ACTL6A/BAF53A or ACTL6B/BAF53B, SMARCE1/BAF57, SMARCD1/BAF60A, SMARCD2/BAF60B, perhaps SMARCD3/BAF60C, SMARCC1/BAF155, SMARCC2/BAF170, PBRM1/BAF180, ARID2/BAF200 and actin (ACTB). Component of SWI/SNF (GBAF) subcomplex, which includes at least BICRA or BICRAL (mutually exclusive), BRD9, SS18, SMARCA2/BRM, SMARCA4/BRG1/BAF190A, ACTL6A/BAF53, SMARCC1/BAF155, and SMARCD1/BAF60A. Specifically interacts with the VDR heterodimer complex. Interacts with ESR1, NR3C1, NR1H4, PGR, SMARCA4, SMARCC1 and SMARCC2. Interacts with DPF2. Interacts with FOS, FOSB, FOSL1 and FOSL2.

The protein localises to the nucleus. Its function is as follows. Involved in transcriptional activation and repression of select genes by chromatin remodeling (alteration of DNA-nucleosome topology). Component of SWI/SNF chromatin remodeling complexes that carry out key enzymatic activities, changing chromatin structure by altering DNA-histone contacts within a nucleosome in an ATP-dependent manner. Belongs to the neural progenitors-specific chromatin remodeling complex (npBAF complex) and the neuron-specific chromatin remodeling complex (nBAF complex). During neural development a switch from a stem/progenitor to a postmitotic chromatin remodeling mechanism occurs as neurons exit the cell cycle and become committed to their adult state. The transition from proliferating neural stem/progenitor cells to postmitotic neurons requires a switch in subunit composition of the npBAF and nBAF complexes. As neural progenitors exit mitosis and differentiate into neurons, npBAF complexes which contain ACTL6A/BAF53A and PHF10/BAF45A, are exchanged for homologous alternative ACTL6B/BAF53B and DPF1/BAF45B or DPF3/BAF45C subunits in neuron-specific complexes (nBAF). The npBAF complex is essential for the self-renewal/proliferative capacity of the multipotent neural stem cells. The nBAF complex along with CREST plays a role regulating the activity of genes essential for dendrite growth. Has a strong influence on vitamin D-mediated transcriptional activity from an enhancer vitamin D receptor element (VDRE). May be a link between mammalian SWI-SNF-like chromatin remodeling complexes and the vitamin D receptor (VDR) heterodimer. Mediates critical interactions between nuclear receptors and the BRG1/SMARCA4 chromatin-remodeling complex for transactivation. Interacts with AKIRIN2. The chain is SWI/SNF-related matrix-associated actin-dependent regulator of chromatin subfamily D member 1 (SMARCD1) from Bos taurus (Bovine).